The chain runs to 268 residues: Probable 1-acyl-sn-glycerol-3-phosphate acyltransferase (268 aa).

The short motif at 92–97 (HKSNLD) is the HXXXXD motif element.

The protein belongs to the 1-acyl-sn-glycerol-3-phosphate acyltransferase family.

The enzyme catalyses a 1-acyl-sn-glycero-3-phosphate + an acyl-CoA = a 1,2-diacyl-sn-glycero-3-phosphate + CoA. It functions in the pathway phospholipid metabolism; CDP-diacylglycerol biosynthesis; CDP-diacylglycerol from sn-glycerol 3-phosphate: step 2/3. Its function is as follows. Converts lysophosphatidic acid (LPA) into phosphatidic acid by incorporating acyl moiety at the 2 position. The chain is Probable 1-acyl-sn-glycerol-3-phosphate acyltransferase (plsC) from Mycoplasma genitalium (strain ATCC 33530 / DSM 19775 / NCTC 10195 / G37) (Mycoplasmoides genitalium).